The primary structure comprises 439 residues: Trigger factor (439 aa).

One can recognise a PPIase FKBP-type domain in the interval 165 to 250 (GDFAKFDFEG…LHEIQELKLP (86 aa)).

This sequence belongs to the FKBP-type PPIase family. Tig subfamily.

The protein localises to the cytoplasm. The enzyme catalyses [protein]-peptidylproline (omega=180) = [protein]-peptidylproline (omega=0). Functionally, involved in protein export. Acts as a chaperone by maintaining the newly synthesized protein in an open conformation. Functions as a peptidyl-prolyl cis-trans isomerase. The protein is Trigger factor of Campylobacter lari (strain RM2100 / D67 / ATCC BAA-1060).